We begin with the raw amino-acid sequence, 77 residues long: Putative defensin-like protein 185 (77 aa).

The first 22 residues, 1–22, serve as a signal peptide directing secretion; the sequence is MKNSSILLLLVVFFVISSSGEA. Disulfide bonds link cysteine 25/cysteine 77, cysteine 31/cysteine 54, cysteine 40/cysteine 71, and cysteine 44/cysteine 73.

This sequence belongs to the DEFL family.

Its subcellular location is the secreted. This is Putative defensin-like protein 185 (LCR39) from Arabidopsis thaliana (Mouse-ear cress).